The primary structure comprises 78 residues: Translational regulator CsrA (78 aa).

It belongs to the CsrA/RsmA family. In terms of assembly, homodimer; the beta-strands of each monomer intercalate to form a hydrophobic core, while the alpha-helices form wings that extend away from the core.

The protein localises to the cytoplasm. Its function is as follows. A translational regulator that binds mRNA to regulate translation initiation and/or mRNA stability. Usually binds in the 5'-UTR at or near the Shine-Dalgarno sequence preventing ribosome-binding, thus repressing translation. Its main target seems to be the major flagellin gene, while its function is anatagonized by FliW. The chain is Translational regulator CsrA from Geobacter metallireducens (strain ATCC 53774 / DSM 7210 / GS-15).